The primary structure comprises 134 residues: Putative integral membrane protein YxzK (134 aa).

The next 4 membrane-spanning stretches (helical) occupy residues 3–23 (VIRI…GEAI), 35–55 (IVGL…VSII), 58–78 (GAGF…TGVI), and 89–109 (LMLL…AGFA).

It is found in the cell membrane. This Bacillus subtilis (strain 168) protein is Putative integral membrane protein YxzK (yxzK).